The chain runs to 124 residues: MVEPNISAYLQNQLRQAQELEENIEKLATQRYQLDLSLKEMQKTLDELNKLDDNTPIYRTVGSILYRVQDKKKLVDELDEQIELTKIRLSTLEKQQKSLEEKYKELQNAIRDRYNQENKKGATS.

The protein belongs to the prefoldin subunit beta family. Heterohexamer of two alpha and four beta subunits.

The protein localises to the cytoplasm. Molecular chaperone capable of stabilizing a range of proteins. Seems to fulfill an ATP-independent, HSP70-like function in archaeal de novo protein folding. This is Prefoldin subunit beta (pfdB) from Thermoplasma acidophilum (strain ATCC 25905 / DSM 1728 / JCM 9062 / NBRC 15155 / AMRC-C165).